Consider the following 440-residue polypeptide: WAS/WASL-interacting protein family member 2 (440 aa).

Pro residues predominate over residues 1-18 (MPIPPPPPPPPGPPPPPT). Residues 1-36 (MPIPPPPPPPPGPPPPPTFHQANTEQPKLSRDEQRG) are disordered. Positions 36 to 53 (GRGALLQDICKGTKLKKV) constitute a WH2 domain. Residue Arg37 is modified to Asymmetric dimethylarginine. Positions 49–52 (KLKK) are binds actin. Disordered stretches follow at residues 56–387 (INDR…DSIT) and 419–440 (RIYPSKTNRAARGAPPLPPILR). Low complexity predominate over residues 116–133 (PSSRAAAPRPPVSAASGR). Residues 161-172 (RPNTTSSTGMKH) show a composition bias toward polar residues. Composition is skewed to pro residues over residues 176-193 (APPPPPPGRRANAPPTPL), 222-236 (EGPPAPPPVKPPPSP), 249-262 (APPPPPYRQPPGVP), and 356-378 (RGKPPPPPSRTPAGPPPPPPPPL).

This sequence belongs to the verprolin family. Interacts with WASL and WASP, and this interaction results in cytoplasmic relocation of these two proteins along actin filaments. Interacts with NCK2 resulting in the localization to sites of focal adhesions. No interaction was seen with WASF2 and WASF3. In terms of tissue distribution, expressed mainly in brain, colon, lung and stomach (at protein level). Ubiquitously expressed, with high expression in brain, kidney, lung, and placenta.

It is found in the cytoplasm. The protein localises to the cytoskeleton. In terms of biological role, plays an active role in the formation of cell surface protrusions downstream of activated PDGFB receptors. Plays an important role in actin-microspike formation through cooperation with WASL. May cooperate with WASP and WASL to induce mobilization and reorganization of the actin filament system. The protein is WAS/WASL-interacting protein family member 2 (WIPF2) of Homo sapiens (Human).